We begin with the raw amino-acid sequence, 1027 residues long: Scavenger receptor cysteine-rich domain-containing protein SCART1 (1027 aa).

Positions 1 to 19 are cleaved as a signal peptide; that stretch reads MRAALWTLGLGPLLLNLWA. Over 20 to 906 the chain is Extracellular; sequence VPIGGPGALR…APFRTFWVVS (887 aa). Positions 28 to 128 constitute an SRCR 1 domain; the sequence is LRLAYRHSTC…HAWVVVALCS (101 aa). 3 disulfide bridges follow: cysteine 53–cysteine 117, cysteine 66–cysteine 127, and cysteine 97–cysteine 107. The N-linked (GlcNAc...) asparagine glycan is linked to asparagine 94. The N-linked (GlcNAc...) asparagine glycan is linked to asparagine 129. SRCR domains lie at 135 to 227, 232 to 326, 328 to 428, 434 to 534, 555 to 656, 661 to 761, and 786 to 886; these read LRLV…VVCS, ARLV…LRCS, FRMV…AVCS, LRLR…VVCS, LSLH…VFCS, LRLR…AGLS, and LRVR…VRCW. Cystine bridges form between cysteine 160–cysteine 216, cysteine 171–cysteine 226, cysteine 196–cysteine 206, cysteine 253–cysteine 315, cysteine 266–cysteine 325, and cysteine 297–cysteine 307. Residue asparagine 332 is glycosylated (N-linked (GlcNAc...) asparagine). Intrachain disulfides connect cysteine 353/cysteine 417, cysteine 366/cysteine 427, cysteine 397/cysteine 407, cysteine 472/cysteine 533, cysteine 503/cysteine 513, cysteine 594/cysteine 655, and cysteine 625/cysteine 635. 2 cysteine pairs are disulfide-bonded: cysteine 824–cysteine 885 and cysteine 855–cysteine 865. Residues 907–927 traverse the membrane as a helical segment; sequence VVLGSLLGLLLLGLMAFLILP. Residues 928–1027 lie on the Cytoplasmic side of the membrane; the sequence is RVTQAMQRGL…AAFPLEEMTL (100 aa).

As to expression, mainly expressed by CD4(+) and CD8(+) T lymphocytes. Also highly expressed in small intestine and colon. Expressed (at protein level) in small intestine, stomach, gall bladder, and placental villi.

The protein localises to the membrane. In terms of biological role, may play a role in the immune system, perhaps as a co-receptor on alphabeta and gammadelta T-cells. The protein is Scavenger receptor cysteine-rich domain-containing protein SCART1 of Homo sapiens (Human).